The following is a 434-amino-acid chain: Adenylosuccinate synthetase (434 aa).

Residues 22–28 (GDEGKGK) and 50–52 (GHT) contribute to the GTP site. The Proton acceptor role is filled by aspartate 23. Residues aspartate 23 and glycine 50 each contribute to the Mg(2+) site. Residues 23–26 (DEGK), 48–51 (NAGH), threonine 139, arginine 153, glutamine 234, threonine 249, and arginine 313 contribute to the IMP site. Catalysis depends on histidine 51, which acts as the Proton donor. Position 309–315 (309–315 (ATTGRKR)) interacts with substrate. GTP is bound by residues arginine 315, 341 to 343 (KLD), and 423 to 425 (SVG).

The protein belongs to the adenylosuccinate synthetase family. As to quaternary structure, homodimer. Mg(2+) serves as cofactor.

The protein localises to the cytoplasm. The enzyme catalyses IMP + L-aspartate + GTP = N(6)-(1,2-dicarboxyethyl)-AMP + GDP + phosphate + 2 H(+). It participates in purine metabolism; AMP biosynthesis via de novo pathway; AMP from IMP: step 1/2. Plays an important role in the de novo pathway of purine nucleotide biosynthesis. Catalyzes the first committed step in the biosynthesis of AMP from IMP. The chain is Adenylosuccinate synthetase from Chlorobium chlorochromatii (strain CaD3).